We begin with the raw amino-acid sequence, 144 residues long: Small ribosomal subunit protein eS19B (144 aa).

This sequence belongs to the eukaryotic ribosomal protein eS19 family. As to quaternary structure, component of the small ribosomal subunit (SSU). Mature yeast ribosomes consist of a small (40S) and a large (60S) subunit. The 40S small subunit contains 1 molecule of ribosomal RNA (18S rRNA) and 33 different proteins (encoded by 57 genes). The large 60S subunit contains 3 rRNA molecules (25S, 5.8S and 5S rRNA) and 46 different proteins (encoded by 81 genes).

It localises to the cytoplasm. Component of the ribosome, a large ribonucleoprotein complex responsible for the synthesis of proteins in the cell. The small ribosomal subunit (SSU) binds messenger RNAs (mRNAs) and translates the encoded message by selecting cognate aminoacyl-transfer RNA (tRNA) molecules. The large subunit (LSU) contains the ribosomal catalytic site termed the peptidyl transferase center (PTC), which catalyzes the formation of peptide bonds, thereby polymerizing the amino acids delivered by tRNAs into a polypeptide chain. The nascent polypeptides leave the ribosome through a tunnel in the LSU and interact with protein factors that function in enzymatic processing, targeting, and the membrane insertion of nascent chains at the exit of the ribosomal tunnel. eS19 is required for proper maturation of the small (40S) ribosomal subunit. Binds to 40S pre-ribosomal particles, probably required after association of NOC4 but before association of ENP1, TSR1 and RIO2 with 20/21S pre-rRNA. In terms of biological role, required for proper maturation of the small (40S) ribosomal subunit. Binds to 40s pre-ribosomal particles, probably required after association of NOC4 but before association of ENP1, TSR1 and RIO2 with 20/21S pre-rRNA. The protein is Small ribosomal subunit protein eS19B of Saccharomyces cerevisiae (strain ATCC 204508 / S288c) (Baker's yeast).